Reading from the N-terminus, the 480-residue chain is MAANGSSSEGDHRLLIVSNRLPITIRRSGGGKYEFSMSSGGLVTGLSGLSKTTTFQWYGWPGLEVPEDEIDSVKQRLQEEFNATPVFMDDKLADRHYNGFSNSILWPLLHYHPGEIVFDEAAWDAYREANRLFAKTIAHEAREGDLVWVHDYHLMLLPEVLREELAALGKNNIRIGFFLHTPFPSSEIYRILPVRSQLLRGVLQCDLIGFHTYDYARHFLSCCSHILGLVTTPSSVKFKDRSVAVGAFPIGIDPDKFTEGLKSPKVQNRIASLENKFQGTKLMVSVDRLDYIKGIPQKLHALEVFLSQHPEWVGKVVLVQVAVPSRQDVEEYQNLRAVVNELVGRINGKFGTVDYMPIHFMHKSVSFDELIALYAASDACVVSSTRDGMNLVSFEYVATQQKRKGVLILSEFAGAAQSLNGSIVVNPWNTEELASAYHEAVSMSDDLRAQKFEKLYKYISKYTSAFWGKSFVAELSKCST.

D-glucose 6-phosphate is bound by residues Tyr-97 and Asp-151. 2 residues coordinate UDP: Arg-288 and Lys-293. UDP-alpha-D-glucose contacts are provided by Arg-288 and Lys-293. Residue Arg-326 participates in D-glucose 6-phosphate binding. 387–395 (DGMNLVSFE) is a UDP-alpha-D-glucose binding site. Residue 391–395 (LVSFE) participates in UDP binding.

Belongs to the glycosyltransferase 20 family.

It catalyses the reaction D-glucose 6-phosphate + UDP-alpha-D-glucose = alpha,alpha-trehalose 6-phosphate + UDP + H(+). It functions in the pathway carbohydrate biosynthesis. Functionally, synthase catalytic subunit of the trehalose synthase complex that catalyzes the production of trehalose from glucose-6-phosphate and UDP-alpha-D-glucose in a two step process. This chain is Alpha,alpha-trehalose-phosphate synthase [UDP-forming] 2, found in Aspergillus niger.